A 211-amino-acid polypeptide reads, in one-letter code: Arginine exporter protein ArgO (211 aa).

A run of 6 helical transmembrane segments spans residues 1-21 (MISYYFQGFALGAAMILPLGP), 37-57 (LMIALLCALSDLVLISAGIFG), 68-88 (LLALVTWGGVAFLLWYGFGAL), 111-131 (IIATMLAVTWLNPHVYLDTFV), 147-167 (WFALGTISASFLWFFGLALLA), and 179-199 (AQRIINILVGVVMWLIAFQLA).

Belongs to the LysE/ArgO transporter (TC 2.A.75) family.

It localises to the cell inner membrane. The enzyme catalyses L-arginine(in) = L-arginine(out). Functionally, involved in the export of arginine. Important to control the intracellular level of arginine and the correct balance between arginine and lysine. The protein is Arginine exporter protein ArgO of Salmonella typhimurium (strain LT2 / SGSC1412 / ATCC 700720).